A 209-amino-acid chain; its full sequence is DNA transformation protein TfoX1 (209 aa).

It belongs to the Sxy/TfoX family.

Its function is as follows. Required for DNA transformation jointly with TfoY (tfoX2). The sequence is that of DNA transformation protein TfoX1 from Aliivibrio fischeri (strain ATCC 700601 / ES114) (Vibrio fischeri).